We begin with the raw amino-acid sequence, 959 residues long: Atromentin synthetase invA1 (959 aa).

Residues 59–466 form an adenylation (A) domain region; that stretch reads DSSIQTKTFS…SGRIKETVIV (408 aa). Positions 598–676 constitute a Carrier domain; sequence TPQTETEQTL…SLANYIVALK (79 aa). The tract at residues 603–673 is thiolation and peptide carrier (T) domain; that stretch reads TEQTLAAIYA…VVSSLANYIV (71 aa). S635 is modified (O-(pantetheine 4'-phosphoryl)serine). The interval 699 to 946 is thioesterase (TE) domain; the sequence is PIFMVHPGVG…LMDFDHVPGF (248 aa).

The protein belongs to the ATP-dependent AMP-binding enzyme family.

The protein operates within secondary metabolite biosynthesis. In terms of biological role, an L-tyrosine:2-oxoglutarate aminotransferase (probably invD) and atromentin synthetase invA1 catalyze consecutive steps to turn over L-tyrosine into atromentin, which represents the generic precursor molecule for the entire terphenylquinone and pulvinic acid family of pigments, which are widely distributed secondary metabolites in homobasidiomycetes. The first step catalyzed by the aminotransferase converts L-tyrosine in to 4-hydroxyphenylpyruvate (4-HPP). Adenylation of two 4-HPP monomers by the invA1 adenylation (A) domain, covalent tethering of the monomers as a thioester and oxoester onto the invA1 thiolation (T) and thioesterase (TE) domains, respectively, and symmetric C-C-bond formation between two monomers catalyzed by the invA1 TE domain leads to atromentin. The sequence is that of Atromentin synthetase invA1 (invA1) from Paxillus involutus (Naked brimcap).